The chain runs to 283 residues: 2-dehydro-3-deoxyphosphooctonate aldolase (283 aa).

Belongs to the KdsA family.

It is found in the cytoplasm. It catalyses the reaction D-arabinose 5-phosphate + phosphoenolpyruvate + H2O = 3-deoxy-alpha-D-manno-2-octulosonate-8-phosphate + phosphate. Its pathway is carbohydrate biosynthesis; 3-deoxy-D-manno-octulosonate biosynthesis; 3-deoxy-D-manno-octulosonate from D-ribulose 5-phosphate: step 2/3. It functions in the pathway bacterial outer membrane biogenesis; lipopolysaccharide biosynthesis. The protein is 2-dehydro-3-deoxyphosphooctonate aldolase of Synechococcus sp. (strain WH7803).